Here is a 218-residue protein sequence, read N- to C-terminus: Ribose-5-phosphate isomerase A (218 aa).

Substrate is bound by residues 28–31 (TGST), 81–84 (DGAD), and 94–97 (KGGG). Glu103 functions as the Proton acceptor in the catalytic mechanism. Lys121 contributes to the substrate binding site.

Belongs to the ribose 5-phosphate isomerase family. Homodimer.

It catalyses the reaction aldehydo-D-ribose 5-phosphate = D-ribulose 5-phosphate. The protein operates within carbohydrate degradation; pentose phosphate pathway; D-ribose 5-phosphate from D-ribulose 5-phosphate (non-oxidative stage): step 1/1. In terms of biological role, catalyzes the reversible conversion of ribose-5-phosphate to ribulose 5-phosphate. In Colwellia psychrerythraea (strain 34H / ATCC BAA-681) (Vibrio psychroerythus), this protein is Ribose-5-phosphate isomerase A.